A 111-amino-acid polypeptide reads, in one-letter code: Fluoride-specific ion channel FluC 3 (111 aa).

Transmembrane regions (helical) follow at residues 26–46 (IPAG…LLTF), 53–73 (VVYL…TFAY), and 91–111 (IFLN…ALML). 2 residues coordinate Na(+): Gly63 and Thr66.

This sequence belongs to the fluoride channel Fluc/FEX (TC 1.A.43) family.

It is found in the cell membrane. The enzyme catalyses fluoride(in) = fluoride(out). Its activity is regulated as follows. Na(+) is not transported, but it plays an essential structural role and its presence is essential for fluoride channel function. Its function is as follows. Fluoride-specific ion channel. Important for reducing fluoride concentration in the cell, thus reducing its toxicity. This is Fluoride-specific ion channel FluC 3 from Methanosarcina acetivorans (strain ATCC 35395 / DSM 2834 / JCM 12185 / C2A).